Reading from the N-terminus, the 183-residue chain is Phosphinothricin N-acetyltransferase (183 aa).

Residues 8 to 169 (VEIRPATAAD…DVGFWQRDFE (162 aa)) form the N-acetyltransferase domain. Acetyl-CoA-binding positions include 91–93 (VYV), 99–104 (RLGLGS), and N130.

This sequence belongs to the acetyltransferase family. PAT/BAR subfamily.

The catalysed reaction is phosphinothricin + acetyl-CoA = N-acetylphosphinothricin + CoA + H(+). Inactivates phosphinothricin (PPT) by transfer of an acetyl group from acetyl CoA. This enzyme is an effector of phosphinothricin tripeptide (PTT or bialaphos) resistance. The sequence is that of Phosphinothricin N-acetyltransferase from Streptomyces viridochromogenes (strain DSM 40736 / JCM 4977 / BCRC 1201 / Tue 494).